A 213-amino-acid polypeptide reads, in one-letter code: tRNA (guanine-N(7)-)-methyltransferase (213 aa).

Residues Glu-44, Asp-69, Asp-96, and Asp-118 each coordinate S-adenosyl-L-methionine. The active site involves Asp-118. Lys-122 is a binding site for substrate. Residues Arg-124–Arg-129 are interaction with RNA. Substrate-binding positions include Asp-154 and Thr-191 to Glu-194.

Belongs to the class I-like SAM-binding methyltransferase superfamily. TrmB family.

The enzyme catalyses guanosine(46) in tRNA + S-adenosyl-L-methionine = N(7)-methylguanosine(46) in tRNA + S-adenosyl-L-homocysteine. The protein operates within tRNA modification; N(7)-methylguanine-tRNA biosynthesis. In terms of biological role, catalyzes the formation of N(7)-methylguanine at position 46 (m7G46) in tRNA. The chain is tRNA (guanine-N(7)-)-methyltransferase from Streptococcus thermophilus (strain CNRZ 1066).